Consider the following 283-residue polypeptide: Glutamate racemase (283 aa).

Substrate-binding positions include 7 to 8 and 39 to 40; these read DS and YG. The active-site Proton donor/acceptor is the Cys70. Residue 71-72 participates in substrate binding; it reads NT. Cys206 acts as the Proton donor/acceptor in catalysis. 207–208 contacts substrate; it reads TH.

The protein belongs to the aspartate/glutamate racemases family.

It carries out the reaction L-glutamate = D-glutamate. It participates in cell wall biogenesis; peptidoglycan biosynthesis. In terms of biological role, provides the (R)-glutamate required for cell wall biosynthesis. This chain is Glutamate racemase, found in Caulobacter sp. (strain K31).